Consider the following 296-residue polypeptide: Protease HtpX homolog (296 aa).

2 helical membrane passes run 7 to 27 and 29 to 49; these read TVLL…LVAG and QGMI…YFFS. Zn(2+) is bound at residue histidine 131. The active site involves glutamate 132. Zn(2+) is bound at residue histidine 135. A run of 2 helical transmembrane segments spans residues 141–161 and 178–198; these read ILIS…ANMA and IASI…ATLI. Glutamate 207 is a binding site for Zn(2+).

This sequence belongs to the peptidase M48B family. Zn(2+) serves as cofactor.

Its subcellular location is the cell inner membrane. This Sulfurihydrogenibium sp. (strain YO3AOP1) protein is Protease HtpX homolog.